The sequence spans 322 residues: MRFKGLDLNLLVALDALMTERKLTAAARSINLSQPAMSAAITRLRTYFRDELFTMNGRELVPTPRAEALAPAVREALLHIHLSIISWDPFNPAQSDRSFRIILSDFMTLMFLERVVVRVAREAPAVSFELLPFSDEPDELLRRGDVDFLILPEMFMSHTHPRAKLFDERFVCVSCPTNQKLPPQLSIDNYVSMGHVAAQFGKQRPSVEEWLLREHGLRRRVEVAVPGFTMIPSFLSGTDRIATLPLRLAMHFAKAIPLRITELPQPIFPAFTEAVQWPAPHSSDPASLWMREIFLQEASRVEFQSETSAHALSKADGAIRHP.

Residues Leu6 to Thr63 form the HTH lysR-type domain. The segment at residues Leu23–Thr42 is a DNA-binding region (H-T-H motif).

The protein belongs to the LysR transcriptional regulatory family.

In terms of biological role, regulates the expression of the nod abcFE genes which encode other nodulation proteins. NodD is also a negative regulator of its own expression. Binds flavonoids as inducers. This is Nodulation protein D 1 (nodD1) from Sinorhizobium fredii (strain NBRC 101917 / NGR234).